A 118-amino-acid chain; its full sequence is Large ribosomal subunit protein bL19 (118 aa).

The protein belongs to the bacterial ribosomal protein bL19 family.

This protein is located at the 30S-50S ribosomal subunit interface and may play a role in the structure and function of the aminoacyl-tRNA binding site. The protein is Large ribosomal subunit protein bL19 of Marinobacter nauticus (strain ATCC 700491 / DSM 11845 / VT8) (Marinobacter aquaeolei).